The primary structure comprises 467 residues: 3-isopropylmalate dehydratase large subunit (467 aa).

The [4Fe-4S] cluster site is built by cysteine 347, cysteine 407, and cysteine 410.

The protein belongs to the aconitase/IPM isomerase family. LeuC type 1 subfamily. In terms of assembly, heterodimer of LeuC and LeuD. The cofactor is [4Fe-4S] cluster.

It carries out the reaction (2R,3S)-3-isopropylmalate = (2S)-2-isopropylmalate. The protein operates within amino-acid biosynthesis; L-leucine biosynthesis; L-leucine from 3-methyl-2-oxobutanoate: step 2/4. Functionally, catalyzes the isomerization between 2-isopropylmalate and 3-isopropylmalate, via the formation of 2-isopropylmaleate. In Prochlorococcus marinus (strain MIT 9301), this protein is 3-isopropylmalate dehydratase large subunit.